Reading from the N-terminus, the 72-residue chain is uncharacterized protein (72 aa).

A disordered region spans residues 51–72 (AKGGRQRGETVVVDDQCKEHKE).

Belongs to the YiiE family.

This is an uncharacterized protein from Escherichia coli O6:K15:H31 (strain 536 / UPEC).